The primary structure comprises 381 residues: Dual-specificity RNA methyltransferase RlmN (381 aa).

E96 (proton acceptor) is an active-site residue. The 241-residue stretch at 102–342 folds into the Radical SAM core domain; sequence TDDRGTLCVS…TRTTRGDDID (241 aa). A disulfide bridge links C109 with C345. [4Fe-4S] cluster-binding residues include C116, C120, and C123. Residues 170–171, S202, 224–226, and N302 each bind S-adenosyl-L-methionine; these read GE and SLH. C345 (S-methylcysteine intermediate) is an active-site residue.

Belongs to the radical SAM superfamily. RlmN family. Requires [4Fe-4S] cluster as cofactor.

The protein localises to the cytoplasm. It catalyses the reaction adenosine(2503) in 23S rRNA + 2 reduced [2Fe-2S]-[ferredoxin] + 2 S-adenosyl-L-methionine = 2-methyladenosine(2503) in 23S rRNA + 5'-deoxyadenosine + L-methionine + 2 oxidized [2Fe-2S]-[ferredoxin] + S-adenosyl-L-homocysteine. The enzyme catalyses adenosine(37) in tRNA + 2 reduced [2Fe-2S]-[ferredoxin] + 2 S-adenosyl-L-methionine = 2-methyladenosine(37) in tRNA + 5'-deoxyadenosine + L-methionine + 2 oxidized [2Fe-2S]-[ferredoxin] + S-adenosyl-L-homocysteine. Its function is as follows. Specifically methylates position 2 of adenine 2503 in 23S rRNA and position 2 of adenine 37 in tRNAs. m2A2503 modification seems to play a crucial role in the proofreading step occurring at the peptidyl transferase center and thus would serve to optimize ribosomal fidelity. The sequence is that of Dual-specificity RNA methyltransferase RlmN from Pseudomonas putida (strain W619).